The primary structure comprises 162 residues: NADH-quinone oxidoreductase subunit I (162 aa).

2 4Fe-4S ferredoxin-type domains span residues 53 to 83 and 93 to 122; these read LRRYANGEERCIACKLCEAICPAQAITIEAE and TRYDIDMTKCIYCGYCQEACPVDAIVEGPN. [4Fe-4S] cluster-binding residues include C63, C66, C69, C73, C102, C105, C108, and C112.

The protein belongs to the complex I 23 kDa subunit family. As to quaternary structure, NDH-1 is composed of 14 different subunits. Subunits NuoA, H, J, K, L, M, N constitute the membrane sector of the complex. The cofactor is [4Fe-4S] cluster.

Its subcellular location is the cell inner membrane. It carries out the reaction a quinone + NADH + 5 H(+)(in) = a quinol + NAD(+) + 4 H(+)(out). Functionally, NDH-1 shuttles electrons from NADH, via FMN and iron-sulfur (Fe-S) centers, to quinones in the respiratory chain. The immediate electron acceptor for the enzyme in this species is believed to be ubiquinone. Couples the redox reaction to proton translocation (for every two electrons transferred, four hydrogen ions are translocated across the cytoplasmic membrane), and thus conserves the redox energy in a proton gradient. The polypeptide is NADH-quinone oxidoreductase subunit I (Maricaulis maris (strain MCS10) (Caulobacter maris)).